The primary structure comprises 179 residues: Large ribosomal subunit protein uL5 (179 aa).

Belongs to the universal ribosomal protein uL5 family. As to quaternary structure, part of the 50S ribosomal subunit; part of the 5S rRNA/L5/L18/L25 subcomplex. Contacts the 5S rRNA and the P site tRNA. Forms a bridge to the 30S subunit in the 70S ribosome.

This is one of the proteins that bind and probably mediate the attachment of the 5S RNA into the large ribosomal subunit, where it forms part of the central protuberance. In the 70S ribosome it contacts protein S13 of the 30S subunit (bridge B1b), connecting the 2 subunits; this bridge is implicated in subunit movement. Contacts the P site tRNA; the 5S rRNA and some of its associated proteins might help stabilize positioning of ribosome-bound tRNAs. The polypeptide is Large ribosomal subunit protein uL5 (Hamiltonella defensa subsp. Acyrthosiphon pisum (strain 5AT)).